The following is a 263-amino-acid chain: Nitrogenase iron protein 2 (263 aa).

9 to 16 serves as a coordination point for ATP; the sequence is GKGGIGKS. Cysteine 92 contacts [4Fe-4S] cluster. Arginine 95 carries the ADP-ribosylarginine; by dinitrogenase reductase ADP-ribosyltransferase modification. Residue cysteine 127 participates in [4Fe-4S] cluster binding.

It belongs to the NifH/BchL/ChlL family. As to quaternary structure, homodimer. The cofactor is [4Fe-4S] cluster. The reversible ADP-ribosylation of Arg-95 inactivates the nitrogenase reductase and regulates nitrogenase activity.

The enzyme catalyses N2 + 8 reduced [2Fe-2S]-[ferredoxin] + 16 ATP + 16 H2O = H2 + 8 oxidized [2Fe-2S]-[ferredoxin] + 2 NH4(+) + 16 ADP + 16 phosphate + 6 H(+). Its function is as follows. The key enzymatic reactions in nitrogen fixation are catalyzed by the nitrogenase complex, which has 2 components: the iron protein and the molybdenum-iron protein. The sequence is that of Nitrogenase iron protein 2 (nifH2) from Methanobacterium ivanovii.